A 346-amino-acid chain; its full sequence is Methylthioribose-1-phosphate isomerase (346 aa).

Substrate-binding positions include arginine 44–alanine 46, arginine 87, and glutamine 194. Aspartate 235 functions as the Proton donor in the catalytic mechanism. Substrate is bound at residue asparagine 245–lysine 246.

This sequence belongs to the eIF-2B alpha/beta/delta subunits family. MtnA subfamily.

It catalyses the reaction 5-(methylsulfanyl)-alpha-D-ribose 1-phosphate = 5-(methylsulfanyl)-D-ribulose 1-phosphate. It functions in the pathway amino-acid biosynthesis; L-methionine biosynthesis via salvage pathway; L-methionine from S-methyl-5-thio-alpha-D-ribose 1-phosphate: step 1/6. Functionally, catalyzes the interconversion of methylthioribose-1-phosphate (MTR-1-P) into methylthioribulose-1-phosphate (MTRu-1-P). The chain is Methylthioribose-1-phosphate isomerase from Desulforamulus reducens (strain ATCC BAA-1160 / DSM 100696 / MI-1) (Desulfotomaculum reducens).